Here is a 511-residue protein sequence, read N- to C-terminus: Histidine ammonia-lyase (511 aa).

Positions 142-144 (ASG) form a cross-link, 5-imidazolinone (Ala-Gly). A 2,3-didehydroalanine (Ser) modification is found at Ser143.

It belongs to the PAL/histidase family. In terms of processing, contains an active site 4-methylidene-imidazol-5-one (MIO), which is formed autocatalytically by cyclization and dehydration of residues Ala-Ser-Gly.

It is found in the cytoplasm. The enzyme catalyses L-histidine = trans-urocanate + NH4(+). Its pathway is amino-acid degradation; L-histidine degradation into L-glutamate; N-formimidoyl-L-glutamate from L-histidine: step 1/3. The sequence is that of Histidine ammonia-lyase from Brucella anthropi (strain ATCC 49188 / DSM 6882 / CCUG 24695 / JCM 21032 / LMG 3331 / NBRC 15819 / NCTC 12168 / Alc 37) (Ochrobactrum anthropi).